The chain runs to 191 residues: A-type ATP synthase subunit E (191 aa).

Belongs to the V-ATPase E subunit family. As to quaternary structure, has multiple subunits with at least A(3), B(3), C, D, E, F, H, I and proteolipid K(x).

It is found in the cell membrane. Its function is as follows. Component of the A-type ATP synthase that produces ATP from ADP in the presence of a proton gradient across the membrane. The polypeptide is A-type ATP synthase subunit E (Methanoregula boonei (strain DSM 21154 / JCM 14090 / 6A8)).